Consider the following 292-residue polypeptide: Techylectin-5A (292 aa).

An N-terminal signal peptide occupies residues 1-23 (MHNLRNILFVITLIGQKYGLTSS). Glutamine 24 is modified (pyrrolidone carboxylic acid). The Fibrinogen C-terminal domain occupies 63 to 286 (PIVSPDPTDC…QVEMKIRPVE (224 aa)). An intrachain disulfide couples cysteine 72 to cysteine 103. N-linked (GlcNAc...) asparagine glycans are attached at residues asparagine 173, asparagine 198, and asparagine 214. Ca(2+) contacts are provided by aspartate 221, histidine 225, and threonine 227. Cysteine 229 and cysteine 242 are disulfide-bonded.

Multimeric. PubMed:10468566 and PubMed:11707569 are in disagreement about the nature of the multimer, PubMed:10468566 finds hexamers and octamers, the results in PubMed:11707569 suggest tetramers. In terms of tissue distribution, strongly expressed in heart and intestine, weakly expressed in hepatopancreas. Not found in hemocytes, stomach, nervous tissue or skeletal muscle.

The protein resides in the secreted. In terms of biological role, lectin involved in innate immunity. Agglutinates all types of human erythrocytes, Gram-positive and Gram-negative bacteria. Has a stronger agglutinating activity towards Gram-negative bacteria than towards Gram-positive bacteria. Specifically recognizes acetyl group-containing substances on agglutinated cells. The hemagglutinating activity was inhibited by EDTA, acetyl group-containing mono- and disaccharides, N-acetyl derivatives of amino acids, other acetyl group-containing substances, propionamide and benzamide. Enhances the antimicrobial activity of big defensin against Gram-positive bacteria but not against Gram-negative bacteria. The protein is Techylectin-5A of Tachypleus tridentatus (Japanese horseshoe crab).